The primary structure comprises 313 residues: MAIYLDFENHIKEIQNEIELALIRGDEDAKEILEKRLDKEVKTIYSNLTDFQKLQLARHPDRPYAMDYIDLILKDKYEVFGDRHYNDDKAIVCFIGKIDNIPVVVIGEEKGRGTKNKLLRNFGMPNPCGYRKALKMAKFAEKFNLPILMLVDTAGAYPGIGAEERGQSEAIAKNLQEFASLKVPTISIIIGEGGSGGALAIAVADKLAMMEYSIFSVISPEGCAAILWDDPSKTEVAIKAMKITPRDLKEAGLIDDIILEPSKGAHRNKISAANTIKEYFLDTLRTIQQDPHFLDNRYKKLMSLGSFVESMPH.

Residues 36–286 (RLDKEVKTIY…KEYFLDTLRT (251 aa)) form the CoA carboxyltransferase C-terminal domain.

Belongs to the AccA family. In terms of assembly, acetyl-CoA carboxylase is a heterohexamer composed of biotin carboxyl carrier protein (AccB), biotin carboxylase (AccC) and two subunits each of ACCase subunit alpha (AccA) and ACCase subunit beta (AccD).

It localises to the cytoplasm. It catalyses the reaction N(6)-carboxybiotinyl-L-lysyl-[protein] + acetyl-CoA = N(6)-biotinyl-L-lysyl-[protein] + malonyl-CoA. It participates in lipid metabolism; malonyl-CoA biosynthesis; malonyl-CoA from acetyl-CoA: step 1/1. Functionally, component of the acetyl coenzyme A carboxylase (ACC) complex. First, biotin carboxylase catalyzes the carboxylation of biotin on its carrier protein (BCCP) and then the CO(2) group is transferred by the carboxyltransferase to acetyl-CoA to form malonyl-CoA. The sequence is that of Acetyl-coenzyme A carboxylase carboxyl transferase subunit alpha from Helicobacter acinonychis (strain Sheeba).